Consider the following 228-residue polypeptide: Latherin (228 aa).

The N-terminal stretch at 1–20 (MLKVSCLFVLLCGLLVPSSA) is a signal peptide. Residues C153 and C196 are joined by a disulfide bond.

The protein belongs to the BPI/LBP/Plunc superfamily. Plunc family. In terms of assembly, monomer. No sign of N-X-[ST] acceptor site even though reported as N-glycosylated. In terms of tissue distribution, found in sweat (at protein level).

It localises to the secreted. Its function is as follows. Major protein in sweat, has surfactant properties. Has a role in temperature regulation by having a capacity to make hydrophobic surfaces wettable and so can function in promoting spreading and evaporation of sweat. This Equus caballus (Horse) protein is Latherin (LATH).